Reading from the N-terminus, the 187-residue chain is Putative manganese efflux pump MntP (187 aa).

6 helical membrane-spanning segments follow: residues 3-23 (WLTI…VALA), 39-59 (LGFH…LLGM), 65-85 (ISAY…GRMV), 103-123 (GMTM…VGLS), 124-144 (IAML…VAGV), and 166-186 (ICGG…HTLL).

Belongs to the MntP (TC 9.B.29) family.

The protein resides in the cell inner membrane. Probably functions as a manganese efflux pump. This is Putative manganese efflux pump MntP from Geobacter sp. (strain M21).